The following is a 154-amino-acid chain: Myoglobin (154 aa).

Residues 2–148 (VLSDAEWHLV…FRKDIAAKYK (147 aa)) form the Globin domain. S4 carries the phosphoserine modification. H65 contributes to the nitrite binding site. An O2-binding site is contributed by H65. T68 is subject to Phosphothreonine. H94 is a binding site for heme b.

The protein belongs to the globin family. In terms of assembly, monomeric.

Its subcellular location is the cytoplasm. It is found in the sarcoplasm. It catalyses the reaction Fe(III)-heme b-[protein] + nitric oxide + H2O = Fe(II)-heme b-[protein] + nitrite + 2 H(+). It carries out the reaction H2O2 + AH2 = A + 2 H2O. Monomeric heme protein which primary function is to store oxygen and facilitate its diffusion within muscle tissues. Reversibly binds oxygen through a pentacoordinated heme iron and enables its timely and efficient release as needed during periods of heightened demand. Depending on the oxidative conditions of tissues and cells, and in addition to its ability to bind oxygen, it also has a nitrite reductase activity whereby it regulates the production of bioactive nitric oxide. Under stress conditions, like hypoxia and anoxia, it also protects cells against reactive oxygen species thanks to its pseudoperoxidase activity. In Balaenoptera acutorostrata (Common minke whale), this protein is Myoglobin (MB).